The primary structure comprises 1235 residues: Serine/threonine-protein kinase TAO2 (1235 aa).

Phosphoserine is present on S9. The region spanning 28–281 (FSDLREIGHG…SEVLLKHRFV (254 aa)) is the Protein kinase domain. Residues 34-42 (IGHGSFGAV) and K57 each bind ATP. The Proton acceptor role is filled by D151. Phosphoserine is present on S181. Residues 318 to 457 (QEAPNGPGAE…TSTTSSARRR (140 aa)) form a disordered region. A compositionally biased stretch (low complexity) spans 350–374 (SSHSVPSMSISASSQSSSVNSLADA). Residues 375–393 (SDNEEEEEEEEEEEEEEEG) show a composition bias toward acidic residues. Residues 394 to 409 (PEAREMAMMQEGEHTV) show a composition bias toward basic and acidic residues. S414 carries the phosphoserine modification. Coiled-coil stretches lie at residues 486 to 547 (SALR…RRHQ) and 574 to 601 (KELAALLEAQKRTYKLRKEQLKEELQEN). Residue S656 is modified to Phosphoserine. The stretch at 681 to 713 (LRQHEATRELELRQLQAVQRTRAELTRLQHQTE) forms a coiled coil. 3 disordered regions span residues 732-777 (HAAQ…QPCS), 804-835 (KEGATLEPKQQRILGEESGAPSPSPQKHGSLV), and 891-939 (QGPA…RPCP). A compositionally biased stretch (polar residues) spans 766-777 (NTGTPIEQQPCS). A phosphoserine mark is found at S777, S825, and S827. The segment covering 899 to 908 (PEEEEEEEEG) has biased composition (acidic residues). Residues 924–934 (PDIPPEPPPTH) show a composition bias toward pro residues. 2 helical membrane-spanning segments follow: residues 965–985 (LLPLLLLLLLPLLAAQGGGGL) and 987–1007 (AALLALEVGLVGLGASYLLLC). Phosphoserine is present on residues H1011 and G1031. The next 3 helical transmembrane spans lie at 1012–1032 (LPSSLFLLLAQGTALGAVLGL), 1043–1063 (LGLGAAWLLAWPGLALPLVAM), and 1166–1186 (QGLASHLPPWAIHTLASWGLL). The disordered stretch occupies residues 1198–1235 (LPRSQRQLGPPASRQPLPGTLAGRRSRTRQSRALPPWR).

This sequence belongs to the protein kinase superfamily. STE Ser/Thr protein kinase family. STE20 subfamily. As to quaternary structure, interacts with MAP2K3 and MAP2K6. Self-associates. Interacts with tubulins through the C-terminal domain. Interacts with MAP3K7 and interferes with MAP3K7-binding to CHUK and thus prevents NF-kappa-B activation. Isoform 2 interacts with PCDH8; this complex may also include CDH2. Requires Mg(2+) as cofactor. In terms of processing, isoforms 1 and 2 are autophosphorylated. C-terminal cleavage of isoform 1 and subsequent nuclear localization requires CASP9 activity. Post-translationally, autophosphorylated. Phosphorylated by ATM. In terms of processing, phosphorylated on Ser-1031 by MAPK14. This phosphorylation is required PCDH8 for endocytosis. Ubiquitously expressed, with a higher level of expression in testis and brain.

Its subcellular location is the cytoplasmic vesicle membrane. It is found in the cytoplasm. It localises to the cytoskeleton. The protein resides in the nucleus. The protein localises to the cell projection. Its subcellular location is the dendrite. It carries out the reaction L-seryl-[protein] + ATP = O-phospho-L-seryl-[protein] + ADP + H(+). The enzyme catalyses L-threonyl-[protein] + ATP = O-phospho-L-threonyl-[protein] + ADP + H(+). Selectively inhibited by the enantiopure organoruthenium inhibitor 9E1. Activated following arsenic trioxide (As(2)O(3)) treatment. Serine/threonine-protein kinase involved in different processes such as membrane blebbing and apoptotic bodies formation DNA damage response and MAPK14/p38 MAPK stress-activated MAPK cascade. Phosphorylates itself, MBP, activated MAPK8, MAP2K3, MAP2K6 and tubulins. Activates the MAPK14/p38 MAPK signaling pathway through the specific activation and phosphorylation of the upstream MAP2K3 and MAP2K6 kinases. In response to DNA damage, involved in the G2/M transition DNA damage checkpoint by activating the p38/MAPK14 stress-activated MAPK cascade, probably by mediating phosphorylation of upstream MAP2K3 and MAP2K6 kinases. Isoform 1, but not isoform 2, plays a role in apoptotic morphological changes, including cell contraction, membrane blebbing and apoptotic bodies formation. This function, which requires the activation of MAPK8/JNK and nuclear localization of C-terminally truncated isoform 1, may be linked to the mitochondrial CASP9-associated death pathway. Isoform 1 binds to microtubules and affects their organization and stability independently of its kinase activity. Prevents MAP3K7-mediated activation of CHUK, and thus NF-kappa-B activation, but not that of MAPK8/JNK. May play a role in the osmotic stress-MAPK8 pathway. Isoform 2, but not isoform 1, is required for PCDH8 endocytosis. Following homophilic interactions between PCDH8 extracellular domains, isoform 2 phosphorylates and activates MAPK14/p38 MAPK which in turn phosphorylates isoform 2. This process leads to PCDH8 endocytosis and CDH2 cointernalization. Both isoforms are involved in MAPK14 phosphorylation. In Homo sapiens (Human), this protein is Serine/threonine-protein kinase TAO2 (TAOK2).